Consider the following 290-residue polypeptide: Undecaprenyl-diphosphatase (290 aa).

6 consecutive transmembrane segments (helical) span residues 39–59, 85–105, 118–138, 202–222, 230–250, and 261–281; these read PGAA…LIYF, AQMG…GITL, LIAT…RLAA, SFLL…KDVG, PTIF…AWFM, and FVIY…AGVL.

Belongs to the UppP family.

The protein localises to the cell membrane. The catalysed reaction is di-trans,octa-cis-undecaprenyl diphosphate + H2O = di-trans,octa-cis-undecaprenyl phosphate + phosphate + H(+). In terms of biological role, catalyzes the dephosphorylation of undecaprenyl diphosphate (UPP). Confers resistance to bacitracin. The chain is Undecaprenyl-diphosphatase from Streptomyces griseus subsp. griseus (strain JCM 4626 / CBS 651.72 / NBRC 13350 / KCC S-0626 / ISP 5235).